The following is a 100-amino-acid chain: Ubiquitin-related modifier 1 homolog (100 aa).

The residue at position 100 (Gly-100) is a 1-thioglycine. Residue Gly-100 forms a Glycyl lysine isopeptide (Gly-Lys) (interchain with K-? in acceptor proteins) linkage.

The protein belongs to the URM1 family. Post-translationally, C-terminal thiocarboxylation occurs in 2 steps, it is first acyl-adenylated (-COAMP) via the hesA/moeB/thiF part of the MOCS3 homolog, then thiocarboxylated (-COSH) via the rhodanese domain of the MOCS3 homolog.

It localises to the cytoplasm. Its pathway is tRNA modification; 5-methoxycarbonylmethyl-2-thiouridine-tRNA biosynthesis. Functionally, acts as a sulfur carrier required for 2-thiolation of mcm(5)S(2)U at tRNA wobble positions of cytosolic tRNA(Lys), tRNA(Glu) and tRNA(Gln). Serves as sulfur donor in tRNA 2-thiolation reaction by being thiocarboxylated (-COSH) at its C-terminus by MOCS3. The sulfur is then transferred to tRNA to form 2-thiolation of mcm(5)S(2)U. Also acts as a ubiquitin-like protein (UBL) that is covalently conjugated via an isopeptide bond to lysine residues of target proteins. The thiocarboxylated form serves as substrate for conjugation and oxidative stress specifically induces the formation of UBL-protein conjugates. The sequence is that of Ubiquitin-related modifier 1 homolog from Caenorhabditis elegans.